Consider the following 261-residue polypeptide: Phosphatidylglycerol--prolipoprotein diacylglyceryl transferase (261 aa).

Helical transmembrane passes span 12–32, 41–61, 87–107, and 112–132; these read ISIR…VYLA, IIPD…IVGA, GIAG…LYFF, and LIHP…AQSI. Arginine 134 contributes to the a 1,2-diacyl-sn-glycero-3-phospho-(1'-sn-glycerol) binding site. 3 consecutive transmembrane segments (helical) span residues 170-190, 200-220, and 229-249; these read QPTF…IIVL, GEIA…IEGM, and GLRV…GIII.

The protein belongs to the Lgt family.

The protein localises to the cell membrane. The enzyme catalyses L-cysteinyl-[prolipoprotein] + a 1,2-diacyl-sn-glycero-3-phospho-(1'-sn-glycerol) = an S-1,2-diacyl-sn-glyceryl-L-cysteinyl-[prolipoprotein] + sn-glycerol 1-phosphate + H(+). It functions in the pathway protein modification; lipoprotein biosynthesis (diacylglyceryl transfer). In terms of biological role, catalyzes the transfer of the diacylglyceryl group from phosphatidylglycerol to the sulfhydryl group of the N-terminal cysteine of a prolipoprotein, the first step in the formation of mature lipoproteins. The chain is Phosphatidylglycerol--prolipoprotein diacylglyceryl transferase from Streptococcus sanguinis (strain SK36).